A 56-amino-acid polypeptide reads, in one-letter code: Large ribosomal subunit protein bL33 (56 aa).

This sequence belongs to the bacterial ribosomal protein bL33 family.

The chain is Large ribosomal subunit protein bL33 from Histophilus somni (strain 129Pt) (Haemophilus somnus).